A 208-amino-acid chain; its full sequence is Large ribosomal subunit protein uL3 (208 aa).

Position 149 is an N5-methylglutamine (Gln-149).

The protein belongs to the universal ribosomal protein uL3 family. Part of the 50S ribosomal subunit. Forms a cluster with proteins L14 and L19. Post-translationally, methylated by PrmB.

One of the primary rRNA binding proteins, it binds directly near the 3'-end of the 23S rRNA, where it nucleates assembly of the 50S subunit. This is Large ribosomal subunit protein uL3 from Mannheimia succiniciproducens (strain KCTC 0769BP / MBEL55E).